Here is a 189-residue protein sequence, read N- to C-terminus: HGPRTase-like protein (189 aa).

This sequence belongs to the purine/pyrimidine phosphoribosyltransferase family. Archaeal HPRT subfamily.

Its function is as follows. May catalyze a purine salvage reaction, the substrate is unknown. The chain is HGPRTase-like protein from Halorubrum lacusprofundi (strain ATCC 49239 / DSM 5036 / JCM 8891 / ACAM 34).